The chain runs to 529 residues: Bifunctional purine biosynthesis protein PurH (529 aa).

Residues 1–148 (MQQRRPVRRA…KNHKDVAIVV (148 aa)) enclose the MGS-like domain. Residue lysine 287 is modified to N6-acetyllysine.

It belongs to the PurH family.

It carries out the reaction (6R)-10-formyltetrahydrofolate + 5-amino-1-(5-phospho-beta-D-ribosyl)imidazole-4-carboxamide = 5-formamido-1-(5-phospho-D-ribosyl)imidazole-4-carboxamide + (6S)-5,6,7,8-tetrahydrofolate. It catalyses the reaction IMP + H2O = 5-formamido-1-(5-phospho-D-ribosyl)imidazole-4-carboxamide. It functions in the pathway purine metabolism; IMP biosynthesis via de novo pathway; 5-formamido-1-(5-phospho-D-ribosyl)imidazole-4-carboxamide from 5-amino-1-(5-phospho-D-ribosyl)imidazole-4-carboxamide (10-formyl THF route): step 1/1. It participates in purine metabolism; IMP biosynthesis via de novo pathway; IMP from 5-formamido-1-(5-phospho-D-ribosyl)imidazole-4-carboxamide: step 1/1. The protein is Bifunctional purine biosynthesis protein PurH of Escherichia coli O9:H4 (strain HS).